Consider the following 241-residue polypeptide: Fatty acid metabolism regulator protein (241 aa).

The HTH gntR-type domain maps to 11-79 (QSPAALAEEY…HGKPTKVNNI (69 aa)). A DNA-binding region (H-T-H motif) is located at residues 39–58 (ERDLADKIGVTRTTLREVLQ).

As to quaternary structure, homodimer.

It localises to the cytoplasm. Its function is as follows. Multifunctional regulator of fatty acid metabolism. In Haemophilus influenzae (strain PittEE), this protein is Fatty acid metabolism regulator protein.